Reading from the N-terminus, the 160-residue chain is SsrA-binding protein (160 aa).

The protein belongs to the SmpB family.

It localises to the cytoplasm. Its function is as follows. Required for rescue of stalled ribosomes mediated by trans-translation. Binds to transfer-messenger RNA (tmRNA), required for stable association of tmRNA with ribosomes. tmRNA and SmpB together mimic tRNA shape, replacing the anticodon stem-loop with SmpB. tmRNA is encoded by the ssrA gene; the 2 termini fold to resemble tRNA(Ala) and it encodes a 'tag peptide', a short internal open reading frame. During trans-translation Ala-aminoacylated tmRNA acts like a tRNA, entering the A-site of stalled ribosomes, displacing the stalled mRNA. The ribosome then switches to translate the ORF on the tmRNA; the nascent peptide is terminated with the 'tag peptide' encoded by the tmRNA and targeted for degradation. The ribosome is freed to recommence translation, which seems to be the essential function of trans-translation. The polypeptide is SsrA-binding protein (Enterobacter sp. (strain 638)).